Reading from the N-terminus, the 168-residue chain is Sperm acrosome-associated protein 9 (168 aa).

In terms of assembly, microtubule inner protein component of sperm flagellar doublet microtubules. Interacts with CABP1 and CALR. Interacts with INCA1. Interacts with microtubules. Expressed in sperm (at protein level). Expressed from almost all the cell types of testis, with abundant expression in round and elongated spermatids (at protein level). Predominantly expressed in tissues containing motile cilia.

The protein localises to the cytoplasm. It is found in the cytoplasmic vesicle. Its subcellular location is the secretory vesicle. The protein resides in the acrosome. It localises to the cytoskeleton. The protein localises to the cilium basal body. It is found in the flagellum axoneme. Its subcellular location is the cilium axoneme. The protein resides in the nucleus. In terms of biological role, microtubule inner protein (MIP) part of the dynein-decorated doublet microtubules (DMTs) of multiciliated respiratory cells and the distal singlet microtubules of monoflagellated spermatozoa. Forms an extensive interaction network cross-linking the lumen of axonemal doublet microtubules. The sequence is that of Sperm acrosome-associated protein 9 from Mus musculus (Mouse).